The following is a 1960-amino-acid chain: Intraflagellar transport protein 172 (1960 aa).

WD repeat units lie at residues serine 63–lysine 103 and glycine 328–cysteine 367. 3 TPR repeats span residues lysine 1064–arginine 1098, cysteine 1362–valine 1395, and methionine 1397–arginine 1428.

The protein belongs to the IFT172 family.

Its subcellular location is the cell projection. It is found in the cilium. The protein resides in the flagellum. The protein localises to the cytoplasm. It localises to the cytoskeleton. Its subcellular location is the flagellum axoneme. It is found in the flagellum basal body. Its function is as follows. Component of the intraflagellar transport complex B (IFT-B) involved in flagellar assembly. The polypeptide is Intraflagellar transport protein 172 (Giardia intestinalis (strain ATCC 50803 / WB clone C6) (Giardia lamblia)).